Here is a 266-residue protein sequence, read N- to C-terminus: Apolipoprotein A-I (266 aa).

An N-terminal signal peptide occupies residues 1 to 18 (MKAVVLTLAVLFLTGSQA). 2 repeat units span residues 67–88 (LKLL…EQIG) and 89–110 (PVTQ…QEMS). The 10 X approximate tandem repeats stretch occupies residues 67–266 (LKLLDNWDTL…DEATKKLNAQ (200 aa)). M109 carries the methionine sulfoxide modification. The 3; half-length repeat unit spans residues 111-121 (KDLEEVKQKVQ). 5 tandem repeats follow at residues 122-143 (PYLD…QKVA), 144-165 (PLGT…EKLS), 166-187 (PLGE…AQLA), 188-209 (PYSD…ESGG), and 210-231 (ASLA…EKAK). The stretch at 232–242 (PALEDLRQGLL) is one 9; half-length repeat. Copy 10 of the repeat occupies 243–266 (PVLESFKVGLMAIVDEATKKLNAQ).

This sequence belongs to the apolipoprotein A1/A4/E family. In terms of assembly, homodimer. Interacts with APOA1BP and CLU. Component of a sperm activating protein complex (SPAP), consisting of APOA1, an immunoglobulin heavy chain, an immunoglobulin light chain and albumin. Interacts with NDRG1. Interacts with SCGB3A2. Interacts with NAXE and YJEFN3. In terms of processing, glycosylated. Palmitoylated. Post-translationally, phosphorylation sites are present in the extracellular medium.

It is found in the secreted. Participates in the reverse transport of cholesterol from tissues to the liver for excretion by promoting cholesterol efflux from tissues and by acting as a cofactor for the lecithin cholesterol acyltransferase (LCAT). As part of the SPAP complex, activates spermatozoa motility. The chain is Apolipoprotein A-I (APOA1) from Acinonyx jubatus (Cheetah).